Here is a 256-residue protein sequence, read N- to C-terminus: Tryptophan synthase alpha chain (256 aa).

Active-site proton acceptor residues include Glu51 and Asp62.

It belongs to the TrpA family. In terms of assembly, tetramer of two alpha and two beta chains.

The catalysed reaction is (1S,2R)-1-C-(indol-3-yl)glycerol 3-phosphate + L-serine = D-glyceraldehyde 3-phosphate + L-tryptophan + H2O. Its pathway is amino-acid biosynthesis; L-tryptophan biosynthesis; L-tryptophan from chorismate: step 5/5. The alpha subunit is responsible for the aldol cleavage of indoleglycerol phosphate to indole and glyceraldehyde 3-phosphate. The sequence is that of Tryptophan synthase alpha chain from Solidesulfovibrio magneticus (strain ATCC 700980 / DSM 13731 / RS-1) (Desulfovibrio magneticus).